The chain runs to 488 residues: Inosine-5'-monophosphate dehydrogenase (488 aa).

CBS domains are found at residues 95–153 and 157–214; these read VITN…SMKI and MTKE…PNSS. NAD(+)-binding positions include Asp251 and 301-303; that span reads GIG. Residues Gly303 and Gly305 each contribute to the K(+) site. Residue Ser306 coordinates IMP. Cys308 is a binding site for K(+). Cys308 functions as the Thioimidate intermediate in the catalytic mechanism. IMP contacts are provided by residues 341–343, 364–365, and 388–392; these read DGG, GS, and YRGMG. The active-site Proton acceptor is Arg404. Glu416 contributes to the IMP binding site. K(+) is bound by residues Glu470, Ser471, and His472.

Belongs to the IMPDH/GMPR family. In terms of assembly, homotetramer. Requires K(+) as cofactor.

The catalysed reaction is IMP + NAD(+) + H2O = XMP + NADH + H(+). It participates in purine metabolism; XMP biosynthesis via de novo pathway; XMP from IMP: step 1/1. Mycophenolic acid (MPA) is a non-competitive inhibitor that prevents formation of the closed enzyme conformation by binding to the same site as the amobile flap. In contrast, mizoribine monophosphate (MZP) is a competitive inhibitor that induces the closed conformation. MPA is a potent inhibitor of mammalian IMPDHs but a poor inhibitor of the bacterial enzymes. MZP is a more potent inhibitor of bacterial IMPDH. Catalyzes the conversion of inosine 5'-phosphate (IMP) to xanthosine 5'-phosphate (XMP), the first committed and rate-limiting step in the de novo synthesis of guanine nucleotides, and therefore plays an important role in the regulation of cell growth. The chain is Inosine-5'-monophosphate dehydrogenase from Bacillus subtilis (strain 168).